Here is a 500-residue protein sequence, read N- to C-terminus: L-arabinose isomerase (500 aa).

The Mn(2+) site is built by Glu-306, Glu-333, His-350, and His-450.

Belongs to the arabinose isomerase family. Homohexamer. Requires Mn(2+) as cofactor.

The catalysed reaction is beta-L-arabinopyranose = L-ribulose. Its pathway is carbohydrate degradation; L-arabinose degradation via L-ribulose; D-xylulose 5-phosphate from L-arabinose (bacterial route): step 1/3. In terms of biological role, catalyzes the conversion of L-arabinose to L-ribulose. The sequence is that of L-arabinose isomerase from Salmonella arizonae (strain ATCC BAA-731 / CDC346-86 / RSK2980).